The primary structure comprises 273 residues: Putative phosphoenolpyruvate synthase regulatory protein (273 aa).

ADP is bound at residue G153–T160.

Belongs to the pyruvate, phosphate/water dikinase regulatory protein family. PSRP subfamily.

The catalysed reaction is [pyruvate, water dikinase] + ADP = [pyruvate, water dikinase]-phosphate + AMP + H(+). It carries out the reaction [pyruvate, water dikinase]-phosphate + phosphate + H(+) = [pyruvate, water dikinase] + diphosphate. In terms of biological role, bifunctional serine/threonine kinase and phosphorylase involved in the regulation of the phosphoenolpyruvate synthase (PEPS) by catalyzing its phosphorylation/dephosphorylation. The polypeptide is Putative phosphoenolpyruvate synthase regulatory protein (Variovorax paradoxus (strain S110)).